Reading from the N-terminus, the 2184-residue chain is Genome polyprotein (2184 aa).

Gly-2 is lipidated: N-myristoyl glycine; by host. Over 2 to 1494 (GAQVSTQKTG…HVSRAFICLQ (1493 aa)) the chain is Cytoplasmic. The amphipathic alpha-helix stretch occupies residues 566–582 (FYQSPVEGAIERAIARV). Active-site for protease 2A activity residues include His-871 and Asp-889. Cys-906 and Cys-908 together coordinate Zn(2+). The active-site For protease 2A activity is Cys-960. The Zn(2+) site is built by Cys-966 and His-968. The membrane-binding stretch occupies residues 1100–1172 (SNGWLKKFTE…EQSAPSQSDQ (73 aa)). Residues 1100 to 1238 (SNGWLKKFTE…SPGAGKSVAT (139 aa)) form an oligomerization region. An RNA-binding region spans residues 1121-1125 (AIKIQ). An SF3 helicase domain is found at 1204 to 1360 (EKKMSNYIQF…SMYSQNGKIN (157 aa)). Positions 1368, 1380, and 1385 each coordinate Zn(2+). The C4-type; degenerate zinc finger occupies 1368–1385 (CDEECCPVNFKKCCPLVC). An RNA-binding region spans residues 1412 to 1419 (EYNHRHSV). Residues 1423–1428 (LEALFQ) form an oligomerization region. Residues 1495-1510 (ALTTFVSVAGIIYIIY) lie within the membrane without spanning it. Topologically, residues 1511–2184 (KLFAGFQGAY…TLRRKWLDSF (674 aa)) are cytoplasmic. An O-(5'-phospho-RNA)-tyrosine modification is found at Tyr-1520. Residues 1540-1718 (GPAFEFAVAM…FSAALLKHYF (179 aa)) form the Peptidase C3 domain. Active-site for protease 3C activity residues include His-1579, Glu-1610, and Cys-1686. Positions 1949–2065 (GHLIAFDYSG…SYPWPIDASL (117 aa)) constitute a RdRp catalytic domain. Positions 1955 and 2051 each coordinate Mg(2+).

It belongs to the picornaviruses polyprotein family. Interacts with capsid protein VP1 and capsid protein VP3 to form heterotrimeric protomers. In terms of assembly, interacts with capsid protein VP0, and capsid protein VP3 to form heterotrimeric protomers. Five protomers subsequently associate to form pentamers which serve as building blocks for the capsid. Interacts with capsid protein VP2, capsid protein VP3 and capsid protein VP4 following cleavage of capsid protein VP0. Interacts with host CXADR. As to quaternary structure, interacts with capsid protein VP1 and capsid protein VP3 in the mature capsid. Interacts with capsid protein VP0 and capsid protein VP1 to form heterotrimeric protomers. Five protomers subsequently associate to form pentamers which serve as building blocks for the capsid. Interacts with capsid protein VP4 in the mature capsid. Interacts with protein 2C; this interaction may be important for virion morphogenesis. In terms of assembly, interacts with capsid protein VP1 and capsid protein VP3. As to quaternary structure, homodimer. Homohexamer; forms a hexameric ring structure with 6-fold symmetry characteristic of AAA+ ATPases. Interacts (via N-terminus) with host RTN3 (via reticulon domain); this interaction is important for viral replication. Interacts with capsid protein VP3; this interaction may be important for virion morphogenesis. In terms of assembly, interacts with protein 3CD. As to quaternary structure, homodimer. Interacts with host GBF1. Interacts (via GOLD domain) with host ACBD3 (via GOLD domain); this interaction allows the formation of a viral protein 3A/ACBD3 heterotetramer with a 2:2 stoichiometry, which will stimulate the recruitment of host PI4KB in order to synthesize PI4P at the viral RNA replication sites. Interacts with RNA-directed RNA polymerase. In terms of assembly, interacts with protein 3AB and with RNA-directed RNA polymerase. As to quaternary structure, interacts with Viral protein genome-linked and with protein 3CD. Mg(2+) serves as cofactor. Specific enzymatic cleavages in vivo by the viral proteases yield processing intermediates and the mature proteins. Post-translationally, myristoylation is required for the formation of pentamers during virus assembly. Further assembly of 12 pentamers and a molecule of genomic RNA generates the provirion. In terms of processing, during virion maturation, immature virions are rendered infectious following cleavage of VP0 into VP4 and VP2. This maturation seems to be an autocatalytic event triggered by the presence of RNA in the capsid and it is followed by a conformational change infectious virion. Myristoylation is required during RNA encapsidation and formation of the mature virus particle. Post-translationally, VPg is uridylylated by the polymerase into VPg-pUpU. This acts as a nucleotide-peptide primer for the genomic RNA replication.

The protein localises to the virion. The protein resides in the host cytoplasm. It localises to the host cytoplasmic vesicle membrane. Its subcellular location is the host nucleus. The catalysed reaction is a ribonucleoside 5'-triphosphate + H2O = a ribonucleoside 5'-diphosphate + phosphate + H(+). It carries out the reaction Selective cleavage of Tyr-|-Gly bond in the picornavirus polyprotein.. It catalyses the reaction RNA(n) + a ribonucleoside 5'-triphosphate = RNA(n+1) + diphosphate. The enzyme catalyses Selective cleavage of Gln-|-Gly bond in the poliovirus polyprotein. In other picornavirus reactions Glu may be substituted for Gln, and Ser or Thr for Gly.. Its activity is regulated as follows. Replication or transcription is subject to high level of random mutations by the nucleotide analog ribavirin. Its function is as follows. Forms an icosahedral capsid of pseudo T=3 symmetry with capsid proteins VP2 and VP3. The capsid is 300 Angstroms in diameter, composed of 60 copies of each capsid protein and enclosing the viral positive strand RNA genome. Capsid protein VP1 mainly forms the vertices of the capsid. Capsid protein VP1 interacts with host CXADR to provide virion attachment to target host cells. This attachment induces virion internalization. Tyrosine kinases are probably involved in the entry process. After binding to its receptor, the capsid undergoes conformational changes. Capsid protein VP1 N-terminus (that contains an amphipathic alpha-helix) and capsid protein VP4 are externalized. Together, they shape a pore in the host membrane through which viral genome is translocated to host cell cytoplasm. Functionally, forms an icosahedral capsid of pseudo T=3 symmetry with capsid proteins VP2 and VP3. The capsid is 300 Angstroms in diameter, composed of 60 copies of each capsid protein and enclosing the viral positive strand RNA genome. Lies on the inner surface of the capsid shell. After binding to the host receptor, the capsid undergoes conformational changes. Capsid protein VP4 is released, Capsid protein VP1 N-terminus is externalized, and together, they shape a pore in the host membrane through which the viral genome is translocated into the host cell cytoplasm. In terms of biological role, component of immature procapsids, which is cleaved into capsid proteins VP4 and VP2 after maturation. Allows the capsid to remain inactive before the maturation step. Its function is as follows. Cysteine protease that cleaves viral polyprotein and specific host proteins. It is responsible for the autocatalytic cleavage between the P1 and P2 regions, which is the first cleavage occurring in the polyprotein. Also cleaves the host translation initiation factor EIF4G1, in order to shut down the capped cellular mRNA translation. Inhibits the host nucleus-cytoplasm protein and RNA trafficking by cleaving host members of the nuclear pores. Counteracts stress granule formation probably by antagonizing its assembly or promoting its dissassembly. Cleaves and inhibits host IFIH1/MDA5, thereby inhibiting the type-I IFN production and the establishment of the antiviral state. Cleaves and inhibits host MAVS, thereby inhibiting the type-I IFN production and the establishment of the antiviral state. Functionally, plays an essential role in the virus replication cycle by acting as a viroporin. Creates a pore in the host endoplasmic reticulum and as a consequence releases Ca2+ in the cytoplasm of infected cell. In turn, high levels of cytoplasmic calcium may trigger membrane trafficking and transport of viral ER-associated proteins to viroplasms, sites of viral genome replication. Induces and associates with structural rearrangements of intracellular membranes. Displays RNA-binding, nucleotide binding and NTPase activities. May play a role in virion morphogenesis and viral RNA encapsidation by interacting with the capsid protein VP3. In terms of biological role, localizes the viral replication complex to the surface of membranous vesicles. Together with protein 3CD binds the Cis-Active RNA Element (CRE) which is involved in RNA synthesis initiation. Acts as a cofactor to stimulate the activity of 3D polymerase, maybe through a nucleid acid chaperone activity. Its function is as follows. Localizes the viral replication complex to the surface of membranous vesicles. It inhibits host cell endoplasmic reticulum-to-Golgi apparatus transport and causes the disassembly of the Golgi complex, possibly through GBF1 interaction. This would result in depletion of MHC, trail receptors and IFN receptors at the host cell surface. Plays an essential role in viral RNA replication by recruiting ACBD3 and PI4KB at the viral replication sites, thereby allowing the formation of the rearranged membranous structures where viral replication takes place. Functionally, acts as a primer for viral RNA replication and remains covalently bound to viral genomic RNA. VPg is uridylylated prior to priming replication into VPg-pUpU. The oriI viral genomic sequence may act as a template for this. The VPg-pUpU is then used as primer on the genomic RNA poly(A) by the RNA-dependent RNA polymerase to replicate the viral genome. During genome replication, the VPg-RNA linkage is removed by the host TDP2, thereby accelerating replication. During the late stage of the replication cycle, host TDP2 is excluded from sites of viral RNA synthesis and encapsidation, allowing for the generation of progeny virions. Involved in the viral replication complex and viral polypeptide maturation. It exhibits protease activity with a specificity and catalytic efficiency that is different from protease 3C. Protein 3CD lacks polymerase activity. Protein 3CD binds to the 5'UTR of the viral genome. In terms of biological role, replicates the viral genomic RNA on the surface of intracellular membranes. May form linear arrays of subunits that propagate along a strong head-to-tail interaction called interface-I. Covalently attaches UMP to a tyrosine of VPg, which is used to prime RNA synthesis. The positive stranded RNA genome is first replicated at virus induced membranous vesicles, creating a dsRNA genomic replication form. This dsRNA is then used as template to synthesize positive stranded RNA genomes. ss(+)RNA genomes are either translated, replicated or encapsidated. Its function is as follows. Major viral protease that mediates proteolytic processing of the polyprotein. Cleaves host EIF5B, contributing to host translation shutoff. Also cleaves host PABPC1, contributing to host translation shutoff. Cleaves host NLRP1, triggers host N-glycine-mediated degradation of the autoinhibitory NLRP1 N-terminal fragment. The protein is Genome polyprotein of Coxsackievirus B6 (strain Schmitt).